Consider the following 317-residue polypeptide: Lysosomal-associated transmembrane protein 4B (317 aa).

A disordered region spans residues 25 to 73; that stretch reads AFGAKGTDPAEARSSRGIEEAGPRAHGRAGREPERRRSRQQRRGGLQAR. Positions 32 to 59 are enriched in basic and acidic residues; the sequence is DPAEARSSRGIEEAGPRAHGRAGREPER. A run of 4 helical transmembrane segments spans residues 117–137, 163–183, 191–211, and 244–264; these read ILLG…LLSA, MCIA…ATYG, WIIP…LVAI, and CLVL…GYLI. Residues 205–221 form a required for NEDD4 interaction region; the sequence is LNMLVAITVLIYPNSIQ.

It belongs to the LAPTM4/LAPTM5 transporter family. Homooligomer; upon reaching the lysosomes. Interacts with MCOLN1. Interacts with NEDD4; may play a role in the lysosomal sorting of LAPTM4B; enhances HGS association with NEDD4; mediates inhibition of EGFR degradation. Interacts with PIP5K1C; promotes SNX5 association with LAPTM4B; kinase activity of PIP5K1C is required; interaction is regulated by phosphatidylinositol 4,5-bisphosphate generated by PIP5K1C. Interacts with HGS; promotes HGS ubiquitination. Interacts with SNX5. Interacts with SLC3A2 and SLC7A5; recruits SLC3A2 and SLC7A5 to lysosomes to promote leucine uptake into these organelles and is required for mTORC1 activation. Interacts with LRRC32; decreases TGFB1 production in regulatory T cells. Interacts with BECN1; competes with EGFR for LAPTM4B binding; regulates EGFR activity. Interacts with EGFR; positively correlates with EGFR activation. Undergoes proteolytic cleavage following delivery to the lysosomes. Post-translationally, ubiquitinated by NEDD4.

It localises to the endomembrane system. It is found in the late endosome membrane. The protein localises to the cell membrane. The protein resides in the cell projection. Its subcellular location is the lysosome membrane. It localises to the endosome membrane. It is found in the endosome. The protein localises to the multivesicular body membrane. The protein resides in the multivesicular body lumen. In terms of biological role, required for optimal lysosomal function. Blocks EGF-stimulated EGFR intraluminal sorting and degradation. Conversely by binding with the phosphatidylinositol 4,5-bisphosphate, regulates its PIP5K1C interaction, inhibits HGS ubiquitination and relieves LAPTM4B inhibition of EGFR degradation. Recruits SLC3A2 and SLC7A5 (the Leu transporter) to the lysosome, promoting entry of leucine and other essential amino acid (EAA) into the lysosome, stimulating activation of proton-transporting vacuolar (V)-ATPase protein pump (V-ATPase) and hence mTORC1 activation. Plays a role as negative regulator of TGFB1 production in regulatory T cells. Binds ceramide and facilitates its exit from late endosome in order to control cell death pathways. The polypeptide is Lysosomal-associated transmembrane protein 4B (Homo sapiens (Human)).